Consider the following 361-residue polypeptide: MGNILTCCVCPRASPGLHQHQGLVCHCESEIYEAAAGDLIAGVPVAAAVEPGEVTFVAGEGLHMHHICEREMPEDIPLEPNPSDHPKASTIFLRKSQTDVQEKKKKQLCKVSTEHFTQQYSSCSTIFLDDSIASQPHLTMTLKSCDLGTILSYQAKRDAHRSLGIFDEQLHPLTVRKEVLEEYFKYDPEHKLIFRFVRTLFKAMRLTAEFAIVSLIYIERLVSYADIDICPTNWKRIVLGAILLASKVWSDMAVWNEDYCKLFKNITVEEMNELERQFLKLINYNNSITNSVYSRFYFDLRTLAHNNGLYSPVYLLDRERAWKLEAFSRMEQDKVFYSAAKNGSLSADDLIHLQRAKAILF.

Residues 204-286 (MRLTAEFAIV…QFLKLINYNN (83 aa)) form the Cyclin N-terminal domain.

This sequence belongs to the cyclin family. Cyclin Y subfamily.

This Homo sapiens (Human) protein is Cyclin-Y-like protein 2 (CCNYL2).